A 264-amino-acid chain; its full sequence is S-adenosylmethionine decarboxylase proenzyme (264 aa).

The Schiff-base intermediate with substrate; via pyruvic acid role is filled by Ser-113. Ser-113 is modified (pyruvic acid (Ser); by autocatalysis). Residue His-118 is the Proton acceptor; for processing activity of the active site. The Proton donor; for catalytic activity role is filled by Cys-141.

Belongs to the prokaryotic AdoMetDC family. Type 2 subfamily. As to quaternary structure, heterooctamer of four alpha and four beta chains arranged as a tetramer of alpha/beta heterodimers. Pyruvate is required as a cofactor. In terms of processing, is synthesized initially as an inactive proenzyme. Formation of the active enzyme involves a self-maturation process in which the active site pyruvoyl group is generated from an internal serine residue via an autocatalytic post-translational modification. Two non-identical subunits are generated from the proenzyme in this reaction, and the pyruvate is formed at the N-terminus of the alpha chain, which is derived from the carboxyl end of the proenzyme. The post-translation cleavage follows an unusual pathway, termed non-hydrolytic serinolysis, in which the side chain hydroxyl group of the serine supplies its oxygen atom to form the C-terminus of the beta chain, while the remainder of the serine residue undergoes an oxidative deamination to produce ammonia and the pyruvoyl group blocking the N-terminus of the alpha chain.

It carries out the reaction S-adenosyl-L-methionine + H(+) = S-adenosyl 3-(methylsulfanyl)propylamine + CO2. It participates in amine and polyamine biosynthesis; S-adenosylmethioninamine biosynthesis; S-adenosylmethioninamine from S-adenosyl-L-methionine: step 1/1. Catalyzes the decarboxylation of S-adenosylmethionine to S-adenosylmethioninamine (dcAdoMet), the propylamine donor required for the synthesis of the polyamines spermine and spermidine from the diamine putrescine. The polypeptide is S-adenosylmethionine decarboxylase proenzyme (Azotobacter vinelandii (strain DJ / ATCC BAA-1303)).